The primary structure comprises 190 residues: dTTP/UTP pyrophosphatase (190 aa).

Aspartate 71 serves as the catalytic Proton acceptor.

The protein belongs to the Maf family. YhdE subfamily. Requires a divalent metal cation as cofactor.

Its subcellular location is the cytoplasm. The catalysed reaction is dTTP + H2O = dTMP + diphosphate + H(+). It carries out the reaction UTP + H2O = UMP + diphosphate + H(+). Nucleoside triphosphate pyrophosphatase that hydrolyzes dTTP and UTP. May have a dual role in cell division arrest and in preventing the incorporation of modified nucleotides into cellular nucleic acids. The protein is dTTP/UTP pyrophosphatase of Xanthomonas axonopodis pv. citri (strain 306).